Here is a 199-residue protein sequence, read N- to C-terminus: MIDYIKGNLVAVEPAYLVVEANGIGFQIYCANPYRFINDLNREVVVPTHHYVREDSQRLFGFTTRTERLLFEKLLNVSGIGPKGALAILASGEPEDIIHAIEQEDEALLVRFPGVGKKTARQIILDLKGKLDDMAPMLEPAAGADKQQKNPQLEDALEALRALGYVEKELKKVEKQLKAETLETDEYIRRALALMLKRP.

Residues 1–63 are domain I; sequence MIDYIKGNLV…EDSQRLFGFT (63 aa). The segment at 64-142 is domain II; it reads TRTERLLFEK…DMAPMLEPAA (79 aa). The flexible linker stretch occupies residues 143–153; sequence GADKQQKNPQL. Residues 153–199 form a domain III region; sequence LEDALEALRALGYVEKELKKVEKQLKAETLETDEYIRRALALMLKRP.

It belongs to the RuvA family. Homotetramer. Forms an RuvA(8)-RuvB(12)-Holliday junction (HJ) complex. HJ DNA is sandwiched between 2 RuvA tetramers; dsDNA enters through RuvA and exits via RuvB. An RuvB hexamer assembles on each DNA strand where it exits the tetramer. Each RuvB hexamer is contacted by two RuvA subunits (via domain III) on 2 adjacent RuvB subunits; this complex drives branch migration. In the full resolvosome a probable DNA-RuvA(4)-RuvB(12)-RuvC(2) complex forms which resolves the HJ.

Its subcellular location is the cytoplasm. In terms of biological role, the RuvA-RuvB-RuvC complex processes Holliday junction (HJ) DNA during genetic recombination and DNA repair, while the RuvA-RuvB complex plays an important role in the rescue of blocked DNA replication forks via replication fork reversal (RFR). RuvA specifically binds to HJ cruciform DNA, conferring on it an open structure. The RuvB hexamer acts as an ATP-dependent pump, pulling dsDNA into and through the RuvAB complex. HJ branch migration allows RuvC to scan DNA until it finds its consensus sequence, where it cleaves and resolves the cruciform DNA. The protein is Holliday junction branch migration complex subunit RuvA of Shouchella clausii (strain KSM-K16) (Alkalihalobacillus clausii).